A 128-amino-acid chain; its full sequence is uncharacterized protein (128 aa).

Transmembrane regions (helical) follow at residues 52 to 72 and 91 to 111; these read LLVI…GIFL and LFVA…VMLI.

The protein resides in the cell membrane. This is an uncharacterized protein from Mycoplasma pneumoniae (strain ATCC 29342 / M129 / Subtype 1) (Mycoplasmoides pneumoniae).